Here is a 728-residue protein sequence, read N- to C-terminus: 1,4-alpha-glucan branching enzyme GlgB (728 aa).

The active-site Nucleophile is D405. Residue E458 is the Proton donor of the active site.

Belongs to the glycosyl hydrolase 13 family. GlgB subfamily. In terms of assembly, monomer.

The catalysed reaction is Transfers a segment of a (1-&gt;4)-alpha-D-glucan chain to a primary hydroxy group in a similar glucan chain.. It functions in the pathway glycan biosynthesis; glycogen biosynthesis. Catalyzes the formation of the alpha-1,6-glucosidic linkages in glycogen by scission of a 1,4-alpha-linked oligosaccharide from growing alpha-1,4-glucan chains and the subsequent attachment of the oligosaccharide to the alpha-1,6 position. This chain is 1,4-alpha-glucan branching enzyme GlgB, found in Shigella flexneri.